Here is a 56-residue protein sequence, read N- to C-terminus: Ribosome modulation factor (56 aa).

This sequence belongs to the ribosome modulation factor family.

The protein localises to the cytoplasm. During stationary phase, converts 70S ribosomes to an inactive dimeric form (100S ribosomes). The chain is Ribosome modulation factor from Serratia proteamaculans (strain 568).